The primary structure comprises 247 residues: Probable transcriptional regulatory protein PBPRA1113 (247 aa).

The protein belongs to the TACO1 family.

The protein resides in the cytoplasm. This is Probable transcriptional regulatory protein PBPRA1113 from Photobacterium profundum (strain SS9).